A 126-amino-acid polypeptide reads, in one-letter code: UPF0102 protein plu4003 (126 aa).

The protein belongs to the UPF0102 family.

This chain is UPF0102 protein plu4003, found in Photorhabdus laumondii subsp. laumondii (strain DSM 15139 / CIP 105565 / TT01) (Photorhabdus luminescens subsp. laumondii).